The chain runs to 197 residues: ATP-dependent Clp protease proteolytic subunit (197 aa).

Residue Ser102 is the Nucleophile of the active site. His127 is an active-site residue.

It belongs to the peptidase S14 family. Fourteen ClpP subunits assemble into 2 heptameric rings which stack back to back to give a disk-like structure with a central cavity, resembling the structure of eukaryotic proteasomes.

The protein resides in the cytoplasm. The catalysed reaction is Hydrolysis of proteins to small peptides in the presence of ATP and magnesium. alpha-casein is the usual test substrate. In the absence of ATP, only oligopeptides shorter than five residues are hydrolyzed (such as succinyl-Leu-Tyr-|-NHMec, and Leu-Tyr-Leu-|-Tyr-Trp, in which cleavage of the -Tyr-|-Leu- and -Tyr-|-Trp bonds also occurs).. Its function is as follows. Cleaves peptides in various proteins in a process that requires ATP hydrolysis. Has a chymotrypsin-like activity. Plays a major role in the degradation of misfolded proteins. The sequence is that of ATP-dependent Clp protease proteolytic subunit from Borreliella afzelii (strain PKo) (Borrelia afzelii).